Reading from the N-terminus, the 340-residue chain is S-adenosylmethionine:tRNA ribosyltransferase-isomerase (340 aa).

It belongs to the QueA family. In terms of assembly, monomer.

Its subcellular location is the cytoplasm. It catalyses the reaction 7-aminomethyl-7-carbaguanosine(34) in tRNA + S-adenosyl-L-methionine = epoxyqueuosine(34) in tRNA + adenine + L-methionine + 2 H(+). It functions in the pathway tRNA modification; tRNA-queuosine biosynthesis. Its function is as follows. Transfers and isomerizes the ribose moiety from AdoMet to the 7-aminomethyl group of 7-deazaguanine (preQ1-tRNA) to give epoxyqueuosine (oQ-tRNA). The protein is S-adenosylmethionine:tRNA ribosyltransferase-isomerase of Nitratiruptor sp. (strain SB155-2).